We begin with the raw amino-acid sequence, 281 residues long: Sulfur carrier protein FdhD (281 aa).

C117 functions as the Cysteine persulfide intermediate in the catalytic mechanism.

This sequence belongs to the FdhD family.

It is found in the cytoplasm. In terms of biological role, required for formate dehydrogenase (FDH) activity. Acts as a sulfur carrier protein that transfers sulfur from IscS to the molybdenum cofactor prior to its insertion into FDH. This chain is Sulfur carrier protein FdhD, found in Xanthomonas euvesicatoria pv. vesicatoria (strain 85-10) (Xanthomonas campestris pv. vesicatoria).